The primary structure comprises 640 residues: DNA mismatch repair protein MutL (640 aa).

The tract at residues 343–389 (TKNTATDQRAENLEVKPDSKEKELQPKESQHPRLVACDLPSGKIMPP) is disordered. The segment covering 350 to 373 (QRAENLEVKPDSKEKELQPKESQH) has biased composition (basic and acidic residues).

It belongs to the DNA mismatch repair MutL/HexB family.

Its function is as follows. This protein is involved in the repair of mismatches in DNA. It is required for dam-dependent methyl-directed DNA mismatch repair. May act as a 'molecular matchmaker', a protein that promotes the formation of a stable complex between two or more DNA-binding proteins in an ATP-dependent manner without itself being part of a final effector complex. The chain is DNA mismatch repair protein MutL from Desulforamulus reducens (strain ATCC BAA-1160 / DSM 100696 / MI-1) (Desulfotomaculum reducens).